A 99-amino-acid chain; its full sequence is Small ribosomal subunit protein uS19c (99 aa).

The protein belongs to the universal ribosomal protein uS19 family.

It is found in the plastid. The protein localises to the chloroplast. In terms of biological role, protein S19 forms a complex with S13 that binds strongly to the 16S ribosomal RNA. The protein is Small ribosomal subunit protein uS19c of Oenothera biennis (German evening primrose).